The sequence spans 138 residues: Small ribosomal subunit protein uS11c (138 aa).

It belongs to the universal ribosomal protein uS11 family. Part of the 30S ribosomal subunit.

The protein localises to the plastid. The protein resides in the chloroplast. The chain is Small ribosomal subunit protein uS11c from Acorus calamus (Sweet flag).